A 56-amino-acid chain; its full sequence is PI-stichotoxin-Hcr2n (56 aa).

Residues 4 to 54 (CLEPKKVGRCRGSFPRFYFDSETGKCTPFIYGGCGGNGNNFETLHACRAIC) form the BPTI/Kunitz inhibitor domain. Intrachain disulfides connect C4/C54, C13/C37, and C29/C50.

The protein belongs to the venom Kunitz-type family. Sea anemone type 2 potassium channel toxin subfamily.

The protein resides in the secreted. Its subcellular location is the nematocyst. In terms of biological role, this recombinant serine protease inhibitor inhibits trypsin (Ki=30 nM). It possesses anti-inflammatory activity in vitro. It blocks histamine influence on intracellular calcium concentration in murine bone marrow-derived macrophages (62.2% inhibition at 10 uM), which can indicate inhibition of H1-histamine receptor (HRH1). In contrast to some paralogs, this protein decreases reactive oxygen species (ROS) level in the oxidative stress agent 6-hydroxydopamine (6-OHDA)-induced neurotoxicity model, but does not show cytoprotective activity on neuroblastoma cells. In vivo, it shows analgesic activity, since it increases hot plate and tail flick withdrawal latencies, when using a mice thermal pain stimulation model. The protein is PI-stichotoxin-Hcr2n of Radianthus crispa (Leathery sea anemone).